An 874-amino-acid polypeptide reads, in one-letter code: MALPSSSLSSRIPTGPHPLTHTQCIPHFSTTINAGISAAKPRSFYLRWGKDSQPKNLGSNKIIACVGEGTTSLPYQSAEKTDSLSAPTLVKREFPPGFWKDHVIDSLTSSHKVSAAEEKRIETLISDIKNIFRSMGYGETNPSAYDTAWVARIPAVDGSEQPEFPETLEWILQNQLKDGSWGEGFYFLAYDRILATLACMITLTLWRTGETQIRKGIEFFKTQAGKIEDEADSHRPSGFEIVFPAMLKEAKVLGLDLPYELSFIKQIIEKREAKLERLPTNILYALPTTLLYSLEGLQEIVDWQKIIKLQSKDGSFLTSPASTAAVFMRTGNKKCLEFLNFVLKKFGNHVPCHYPLDLFERLWAVDTVERLGIDRHFKEEIKDALDYVYSHWDERGIGWARENPVPDIDDTAMGLRILRLHGYNVSSDVLKTFRDENGEFFCFLGQTQRGVTDMLNVNRCSHVAFPGETIMQEAKLCTERYLRNALEDVGAFDKWALKKNIRGEVEYALKYPWHRSMPRLEARSYIEHYGPNDVWLGKTMYMMPYISNEKYLELAKLDFNHVQSLHQKELRDLRRWWKSSGFSDLKFTRERVTEIYFSAASFIFEPEFATCRYVYTKMSIFTVILDDLYDAHGTLDNLNLFSEGVKRWDLSLVDRMPQDMKICFTVLYNTVNEIAVEGRKRQGRDVLGYIRNVLEILLAAHTKEAEWSATRYVPSFDEYIENASVSISLGTVVLISALFTGEILTDDVLSKIGRGSRFLQLMDLTGRLVNDTKTYQAERGQGEVASAVQCYMKDHPEISEEEALKHVYTVMENALDELNREFVNNREVPDSCRRLVFETARIMQWFYMEGDGFTVSHEMEIKEHVKNCLFQPVA.

Over residues 1–12 (MALPSSSLSSRI) the composition is skewed to polar residues. A disordered region spans residues 1 to 20 (MALPSSSLSSRIPTGPHPLT). Residues 1 to 37 (MALPSSSLSSRIPTGPHPLTHTQCIPHFSTTINAGIS) constitute a chloroplast transit peptide. Residues Asp-407, Asp-409, Asp-626, Asp-630, Asn-770, and Glu-778 each contribute to the Mg(2+) site. Residues 407-410 (DIDD) carry the DXDD motif motif. Residues 626 to 630 (DDLYD) carry the DDXXD motif motif.

It belongs to the terpene synthase family. Tpsd subfamily. Requires Mg(2+) as cofactor. It depends on Mn(2+) as a cofactor.

The protein localises to the plastid. It localises to the chloroplast. The catalysed reaction is (+)-copalyl diphosphate = isopimara-8(14),15-diene + diphosphate. It participates in terpene metabolism; oleoresin biosynthesis. In terms of biological role, terpene synthase (TPS) involved in the biosynthesis of diterpene natural products included in conifer oleoresin secretions and volatile emissions; these compounds contribute to biotic and abiotic stress defense against herbivores and pathogens. Catalyzes the conversion of (+)-copalyl diphosphate ((+)-CPP) to isopimaradiene. The chain is Isopimaradiene synthase, chloroplastic from Picea sitchensis (Sitka spruce).